The following is a 75-amino-acid chain: Small ribosomal subunit protein bS16 (75 aa).

Belongs to the bacterial ribosomal protein bS16 family.

This is Small ribosomal subunit protein bS16 from Aliarcobacter butzleri (strain RM4018) (Arcobacter butzleri).